The chain runs to 265 residues: MVRKNQEWPDEGELIIGTVYKVLNYGAFAKLEEYHGKEAFIHISEVSSGWVKNIRDHVRENQKIVCRVLRVNPKKGHVDASLKRIREDQRTKKIQHWKIEQKAEKFLELSAKSLGKSLNDAYDEVGYELMDIFGDVYGAFETAADDGAKSLTDEGISQEWADAITEIANKNITPPEVHISGYVDIETFVPDGVDVIIEALKAAEDNGDEEEEIKVQCVGAPRYRITVKSTDYILAEKALKAAADRCIEIVEASEGNGSFLRELDS.

Residues 12–83 (GELIIGTVYK…KKGHVDASLK (72 aa)) form the S1 motif domain.

This sequence belongs to the eIF-2-alpha family. Heterotrimer composed of an alpha, a beta and a gamma chain.

Its function is as follows. eIF-2 functions in the early steps of protein synthesis by forming a ternary complex with GTP and initiator tRNA. In Methanobrevibacter smithii (strain ATCC 35061 / DSM 861 / OCM 144 / PS), this protein is Translation initiation factor 2 subunit alpha.